The chain runs to 727 residues: Cadmium-transporting ATPase (727 aa).

The HMA domain maps to 12–75 (EMNVYRVQGF…AGAFENLKVS (64 aa)). Positions 23 and 26 each coordinate Cd(2+). A run of 5 helical transmembrane segments spans residues 106-126 (STLL…FVNG), 130-150 (LVTS…LFKV), 171-191 (IGAT…LFAI), 336-356 (IIMV…GGSW), and 364-384 (LAVL…ISIV). Asp-415 (4-aspartylphosphate intermediate) is an active-site residue. Helical transmembrane passes span 672–694 (LNII…LLVI) and 699–721 (TLWI…SLRL).

Belongs to the cation transport ATPase (P-type) (TC 3.A.3) family. Type IB subfamily.

The protein localises to the cell membrane. It carries out the reaction Cd(2+)(in) + ATP + H2O = Cd(2+)(out) + ADP + phosphate + H(+). Inhibited by the antibiotic bafilomycin A1. Partially inhibited by DCCD, nigericin and FCCP. In terms of biological role, couples the hydrolysis of ATP with the export of cadmium. Involved in cadmium resistance. The chain is Cadmium-transporting ATPase from Staphylococcus aureus.